Here is a 276-residue protein sequence, read N- to C-terminus: MAQVIKRKPTSPGRRFVVSIVDKELHKGTSYGPLTQNKNRINGRNNAGRITMRHKGGGHKRRYRIIDFKRNKDDITARVERLEYDPNRSANIALILYADGKRHYIIAPRGLSVGDMIVSGNSVAIQVGNVMPLSNIPLGSIVHCIELRPMKGAQIARSAGTSAQLIAKRGTYVTLRLRSGEVRKVLTDCRATIGEVSRSEHSLRKLGKAGATRWHGVRPTVRGVVMNSVDHPHGGGEGKTSGGRHPVSPWGTPTKGYKTRSNKRTDKLILRHRNKG.

A disordered region spans residues 226 to 276; sequence MNSVDHPHGGGEGKTSGGRHPVSPWGTPTKGYKTRSNKRTDKLILRHRNKG.

It belongs to the universal ribosomal protein uL2 family. As to quaternary structure, part of the 50S ribosomal subunit. Forms a bridge to the 30S subunit in the 70S ribosome.

Its function is as follows. One of the primary rRNA binding proteins. Required for association of the 30S and 50S subunits to form the 70S ribosome, for tRNA binding and peptide bond formation. It has been suggested to have peptidyltransferase activity; this is somewhat controversial. Makes several contacts with the 16S rRNA in the 70S ribosome. The polypeptide is Large ribosomal subunit protein uL2 (Vesicomyosocius okutanii subsp. Calyptogena okutanii (strain HA)).